Consider the following 184-residue polypeptide: NADH-quinone oxidoreductase subunit J (184 aa).

The helical transmembrane segment at 1–21 (MEFAFYICGLIAILATLRVIT) threads the bilayer. Residues 22-27 (HTNPVH) lie on the Cytoplasmic side of the membrane. A helical membrane pass occupies residues 28–48 (ALLYLIISLLAISGVFFSLGA). Residues 49-53 (YFAGA) lie on the Periplasmic side of the membrane. A helical transmembrane segment spans residues 54-74 (LEIIVYAGAIMVLFVFVVMML). Topologically, residues 75 to 91 (NLGGSEIEQERQWLKPQ) are cytoplasmic. The chain crosses the membrane as a helical span at residues 92–112 (VWIGPAILSAIMLVVIVYAIL). The Periplasmic segment spans residues 113–137 (GVNDQGIDGTPISAKAVGITLFGPY). A helical membrane pass occupies residues 138–158 (VLAVELASMLLLAGLVVAFHV). The Cytoplasmic segment spans residues 159 to 184 (GREERAGEVLSNRKDDSAKRKTEEHA).

It belongs to the complex I subunit 6 family. As to quaternary structure, composed of 13 different subunits. Subunits NuoA, H, J, K, L, M, N constitute the membrane sector of the complex.

The protein resides in the cell inner membrane. It catalyses the reaction a quinone + NADH + 5 H(+)(in) = a quinol + NAD(+) + 4 H(+)(out). In terms of biological role, NDH-1 shuttles electrons from NADH, via FMN and iron-sulfur (Fe-S) centers, to quinones in the respiratory chain. The immediate electron acceptor for the enzyme in this species is believed to be ubiquinone. Couples the redox reaction to proton translocation (for every two electrons transferred, four hydrogen ions are translocated across the cytoplasmic membrane), and thus conserves the redox energy in a proton gradient. The sequence is that of NADH-quinone oxidoreductase subunit J (nuoJ) from Escherichia coli O157:H7.